The chain runs to 248 residues: Pulmonary surfactant-associated protein A (248 aa).

Positions 1–20 (MLLCSLTLTLILLAVSGTKC) are cleaved as a signal peptide. One can recognise a Collagen-like domain in the interval 31–100 (GVPGIPGSPG…PGERGPPGPP (70 aa)). Positions 34-105 (GIPGSPGLPG…PPGPPAYPDE (72 aa)) are disordered. Pro residues predominate over residues 54–65 (PGPPGPIGPPGG). The span at 84–93 (ERGDKGEPGE) shows a compositional bias: basic and acidic residues. Positions 134 to 247 (VGEKVFSTNG…CLQYRLAICE (114 aa)) constitute a C-type lectin domain. 2 cysteine pairs are disulfide-bonded: Cys155–Cys246 and Cys224–Cys238. Asn207 is a glycosylation site (N-linked (GlcNAc...) asparagine). Ca(2+) contacts are provided by Glu215, Arg217, Asn234, and Asp235.

Belongs to the SFTPA family. As to quaternary structure, oligomeric complex of 6 set of homotrimers.

Its subcellular location is the secreted. The protein resides in the extracellular space. It is found in the extracellular matrix. The protein localises to the surface film. Its function is as follows. In presence of calcium ions, it binds to surfactant phospholipids and contributes to lower the surface tension at the air-liquid interface in the alveoli of the mammalian lung and is essential for normal respiration. Enhances the expression of MYO18A/SP-R210 on alveolar macrophages. This chain is Pulmonary surfactant-associated protein A (SFTPA1), found in Equus caballus (Horse).